Here is a 313-residue protein sequence, read N- to C-terminus: CBK1 kinase activator protein MOB2 (313 aa).

The interval 1–109 (MSFLNTIRGL…KRSSIQTTKS (109 aa)) is disordered. Positions 23-69 (PSNNAIYSHSNLSGNGLRRTQSPTKFSPSKLSSKGAQGSAAYTSSPT) are enriched in polar residues. Phosphoserine; by CDC28 occurs at positions 44, 51, 67, and 97. Positions 76-97 (QSLQHQDSQSSLQYQQQSGSVS) are enriched in low complexity. Residues 98–109 (PSKRSSIQTTKS) show a composition bias toward polar residues.

Belongs to the MOB1/phocein family. In terms of assembly, interacts with protein kinase CBK1 to form the RAM CBK1-MOB2 kinase complex. In terms of processing, phosphorylated by CDC28 at Ser-44, Ser-51, Ser-67, and Ser-97. Phosphorylation occurs during bud emergence and is maintained until the G2/M transition. Dephosphorylated at the end of mitosis. Phosphorylation is required for the maintenance of polarisome components in hyphae.

It is found in the nucleus. It localises to the cytoplasm. Functions as an activator subunit for the CBK1 protein kinase. Part of the regulation of ACE2 activity and cellular morphogenesis (RAM) signaling network. The RAM network is critically required for hyphal growth as well as normal vegetative growth, and for polarization of lipid rafts and the actin cytoskeleton. It play an essential role in biofilm formation. The RAM network also plays a role in serum- and antifungal azoles-induced activation of ergosterol biosynthesis genes, especially those involved in the late steps of ergosterol biosynthesis. In Candida albicans (strain SC5314 / ATCC MYA-2876) (Yeast), this protein is CBK1 kinase activator protein MOB2 (MOB2).